Here is a 120-residue protein sequence, read N- to C-terminus: Vanadium-binding protein 2 (120 aa).

Residues 1–20 (MSKVIFALVLVVVLVACINA) form the signal peptide. Residues 21-29 (TYVEFEEAY) constitute a propeptide that is removed on maturation. Disulfide bonds link cysteine 34–cysteine 88, cysteine 38–cysteine 84, cysteine 42–cysteine 81, cysteine 48–cysteine 74, cysteine 52–cysteine 69, cysteine 56–cysteine 65, cysteine 92–cysteine 119, cysteine 97–cysteine 114, and cysteine 101–cysteine 111.

As to quaternary structure, interacts with VIP1. Expressed in vanadocytes.

The protein localises to the cytoplasm. Its function is as follows. Acts as a vanadium reductase which may form an electron transfer cascade in conjunction with NADPH and glutathione through thiol disulfide exchange reactions. Partial cleavage of its disulfide bonds results in the reduction of V(5+) to V(4+). Binds up to 24 V(4+) ions per protein at pH 7.5. Also binds Fe(3+) and Cu(2+) and, to a lesser extent, Co(2+), Zn(2+) and Ni(2+). In Ascidia sydneiensis samea (Vanadium-rich ascidian), this protein is Vanadium-binding protein 2.